The following is a 179-amino-acid chain: Negative modulator of initiation of replication (179 aa).

The interaction with DNA stretch occupies residues 86–87; it reads AV.

The protein belongs to the SeqA family. In terms of assembly, homodimer. Polymerizes to form helical filaments.

It localises to the cytoplasm. Its function is as follows. Negative regulator of replication initiation, which contributes to regulation of DNA replication and ensures that replication initiation occurs exactly once per chromosome per cell cycle. Binds to pairs of hemimethylated GATC sequences in the oriC region, thus preventing assembly of replication proteins and re-initiation at newly replicated origins. Repression is relieved when the region becomes fully methylated. The protein is Negative modulator of initiation of replication of Shewanella woodyi (strain ATCC 51908 / MS32).